The following is a 699-amino-acid chain: Receptor-type tyrosine-protein phosphatase epsilon (699 aa).

Residues 1–22 (MEPFCPLLLASFSLSLATAGQG) form the signal peptide. The segment covering 20–36 (GQGNDTTPTESNWTSTT) has biased composition (low complexity). Positions 20–41 (GQGNDTTPTESNWTSTTAGPPD) are disordered. Residues Asn23 and Asn31 are each glycosylated (N-linked (GlcNAc...) asparagine). Over 23 to 47 (NDTTPTESNWTSTTAGPPDPGTSQP) the chain is Extracellular. A helical transmembrane segment spans residues 48–68 (LLTWLLLPLLLLLFLLAAYFF). The Cytoplasmic portion of the chain corresponds to 69–699 (RFRKQRKAVV…DIFSDYANFK (631 aa)). 2 Tyrosine-protein phosphatase domains span residues 134 to 393 (FREE…LLEY) and 425 to 688 (LEEE…VQDF). Substrate-binding positions include Asp302, 334-340 (CSAGVGR), and Gln378. Cys334 serves as the catalytic Phosphocysteine intermediate. Cys629 serves as the catalytic Phosphocysteine intermediate. Position 695 is a phosphotyrosine (Tyr695).

It belongs to the protein-tyrosine phosphatase family. Receptor class 4 subfamily. In terms of assembly, monomer. Isoform 2: Homodimer. Can form oligomers. Dimerization is increased by oxidative stress and decreased by EGFR. Isoform 2 interacts with GRB2. A catalytically active cytoplasmic form (p65) is produced by proteolytic cleavage of either isoform 1, isoform 2 or isoform 3. Post-translationally, isoform 1 and isoform 2 are phosphorylated on tyrosine residues by tyrosine kinase Neu. In terms of processing, N-glycosylated. In terms of tissue distribution, isoform 1 is highly expressed in the brain, lung, spleen and testis. Isoform 2 is highly expressed in thymus, spleen and lung. Isoform 1 and isoform 2 are expressed in primary hepatocytes.

The protein resides in the cell membrane. It is found in the cytoplasm. It catalyses the reaction O-phospho-L-tyrosyl-[protein] + H2O = L-tyrosyl-[protein] + phosphate. Functionally, isoform 1 plays a critical role in signaling transduction pathways and phosphoprotein network topology in red blood cells. May play a role in osteoclast formation and function. Acts as a negative regulator of insulin receptor (IR) signaling and is involved in insulin-induced glucose metabolism mainly through direct dephosphorylation and inactivation of IR in hepatocytes and liver. Its function is as follows. Isoform 2 acts as a negative regulator of insulin receptor (IR) signaling in skeletal muscle. Regulates insulin-induced tyrosine phosphorylation of insulin receptor (IR) and insulin receptor substrate 1 (IRS-1), phosphorylation of protein kinase B and glycogen synthase kinase-3 and insulin induced stimulation of glucose uptake. In terms of biological role, isoform 1 and isoform 2 act as a negative regulator of FceRI-mediated signal transduction leading to cytokine production and degranulation, most likely by acting at the level of SYK to affect downstream events such as phosphorylation of SLP76 and LAT and mobilization of Ca(2+). The protein is Receptor-type tyrosine-protein phosphatase epsilon (Ptpre) of Rattus norvegicus (Rat).